Reading from the N-terminus, the 406-residue chain is Tryptophan synthase beta chain (406 aa).

At K99 the chain carries N6-(pyridoxal phosphate)lysine.

It belongs to the TrpB family. In terms of assembly, tetramer of two alpha and two beta chains. The cofactor is pyridoxal 5'-phosphate.

The enzyme catalyses (1S,2R)-1-C-(indol-3-yl)glycerol 3-phosphate + L-serine = D-glyceraldehyde 3-phosphate + L-tryptophan + H2O. It participates in amino-acid biosynthesis; L-tryptophan biosynthesis; L-tryptophan from chorismate: step 5/5. In terms of biological role, the beta subunit is responsible for the synthesis of L-tryptophan from indole and L-serine. The polypeptide is Tryptophan synthase beta chain (Brucella abortus (strain 2308)).